A 78-amino-acid polypeptide reads, in one-letter code: Acyl carrier protein (78 aa).

A Carrier domain is found at 2–77 (SDIAERVKKI…DAIKFLEKNA (76 aa)). An O-(pantetheine 4'-phosphoryl)serine modification is found at S37.

This sequence belongs to the acyl carrier protein (ACP) family. In terms of processing, 4'-phosphopantetheine is transferred from CoA to a specific serine of apo-ACP by AcpS. This modification is essential for activity because fatty acids are bound in thioester linkage to the sulfhydryl of the prosthetic group.

It localises to the cytoplasm. Its pathway is lipid metabolism; fatty acid biosynthesis. Carrier of the growing fatty acid chain in fatty acid biosynthesis. The polypeptide is Acyl carrier protein (Azorhizobium caulinodans (strain ATCC 43989 / DSM 5975 / JCM 20966 / LMG 6465 / NBRC 14845 / NCIMB 13405 / ORS 571)).